Here is a 366-residue protein sequence, read N- to C-terminus: Type 2A phosphatase-associated protein 42 (366 aa).

Residues 318 to 366 (RVLQGGEEPEQAPDEENMDWQDRETYKAREWDEFKESHAKGSGNTMNRG) form a disordered region. Positions 324-336 (EEPEQAPDEENMD) are enriched in acidic residues. A compositionally biased stretch (basic and acidic residues) spans 337–356 (WQDRETYKAREWDEFKESHA).

The protein belongs to the IGBP1/TAP42 family. Associates with the PP2a (PPH21 and PPH22) and SIT4 protein phosphatase catalytic subunits. Interacts with PPG1, PPH3 and TIP41. In terms of processing, phosphorylated by TOR kinases. Dephosphorylated by CDC55, TPD3 and SIT4.

Its function is as follows. Involved in negative regulation of the TOR signaling pathway in response to type of available nitrogen source. Inhibitor of PP2A phosphatase SIT4, which results in inhibition of nuclear export of MSN2, due to lack of dephosphorylation by SIT4. Also required for rapamycin induced activation of expression of many nitrogen discrimination pathway (NDP) genes. In complex with PPH21, required for organization of the actin cytoskeletom during the cell cycle via a Rho GTPase-dependent mechanism. This is Type 2A phosphatase-associated protein 42 (TAP42) from Saccharomyces cerevisiae (strain ATCC 204508 / S288c) (Baker's yeast).